Reading from the N-terminus, the 257-residue chain is Acetylglutamate kinase (257 aa).

Substrate contacts are provided by residues Gly43–Gly44, Arg65, and Asn157. ATP is bound by residues Asp180 to Leu185 and Ile208 to Thr210.

This sequence belongs to the acetylglutamate kinase family. ArgB subfamily. In terms of assembly, homodimer.

It localises to the cytoplasm. The catalysed reaction is N-acetyl-L-glutamate + ATP = N-acetyl-L-glutamyl 5-phosphate + ADP. The protein operates within amino-acid biosynthesis; L-arginine biosynthesis; N(2)-acetyl-L-ornithine from L-glutamate: step 2/4. In terms of biological role, catalyzes the ATP-dependent phosphorylation of N-acetyl-L-glutamate. This chain is Acetylglutamate kinase, found in Sodalis glossinidius (strain morsitans).